The chain runs to 508 residues: Photosystem II CP47 reaction center protein (508 aa).

Helical transmembrane passes span 21–36, 101–115, 140–156, 203–218, 237–252, and 457–472; these read AVHI…WAGS, IVFS…IWHW, GIHL…FGAF, IAAG…FHLS, VLSS…AFVV, and SFAL…HGAR.

This sequence belongs to the PsbB/PsbC family. PsbB subfamily. PSII is composed of 1 copy each of membrane proteins PsbA, PsbB, PsbC, PsbD, PsbE, PsbF, PsbH, PsbI, PsbJ, PsbK, PsbL, PsbM, PsbT, PsbX, PsbY, PsbZ, Psb30/Ycf12, at least 3 peripheral proteins of the oxygen-evolving complex and a large number of cofactors. It forms dimeric complexes. Binds multiple chlorophylls. PSII binds additional chlorophylls, carotenoids and specific lipids. is required as a cofactor.

It is found in the plastid. The protein resides in the chloroplast thylakoid membrane. Functionally, one of the components of the core complex of photosystem II (PSII). It binds chlorophyll and helps catalyze the primary light-induced photochemical processes of PSII. PSII is a light-driven water:plastoquinone oxidoreductase, using light energy to abstract electrons from H(2)O, generating O(2) and a proton gradient subsequently used for ATP formation. This is Photosystem II CP47 reaction center protein from Daucus carota (Wild carrot).